Consider the following 218-residue polypeptide: MGSAALEILGLVLCLVGWVGLILACGLPMWQVTAFLDHNIVTAQTTWKGLWMSCVVQSTGHMQCKVYESVLALSAEVQAARALTVGAVLLALVALFVTLTGAQCTTCVAPGPVKARVALTGGALYAVCGLLALVPLCWFANIVVREFYDPTVPVSQKYELGAALYIGWAASALLMCGGGLVCCGAWVCTGRPEFSFPVKYSAPRRPTANGDYDKKNYV.

At 1–7 the chain is on the cytoplasmic side; that stretch reads MGSAALE. Residues 8–28 traverse the membrane as a helical segment; that stretch reads ILGLVLCLVGWVGLILACGLP. Residues 29 to 81 lie on the Extracellular side of the membrane; it reads MWQVTAFLDHNIVTAQTTWKGLWMSCVVQSTGHMQCKVYESVLALSAEVQAAR. A helical membrane pass occupies residues 82-102; the sequence is ALTVGAVLLALVALFVTLTGA. The Cytoplasmic portion of the chain corresponds to 103–123; the sequence is QCTTCVAPGPVKARVALTGGA. A helical membrane pass occupies residues 124 to 144; the sequence is LYAVCGLLALVPLCWFANIVV. At 145-160 the chain is on the extracellular side; sequence REFYDPTVPVSQKYEL. The helical transmembrane segment at 161 to 181 threads the bilayer; that stretch reads GAALYIGWAASALLMCGGGLV. Over 182-218 the chain is Cytoplasmic; it reads CCGAWVCTGRPEFSFPVKYSAPRRPTANGDYDKKNYV. An interactions with TJP1, TJP2 and TJP3 region spans residues 217 to 218; it reads YV.

Belongs to the claudin family. In terms of assembly, interacts with MPDZ. Directly interacts with TJP1/ZO-1, TJP2/ZO-2 and TJP3/ZO-3. Widely expressed with highest levels in the lung.

The protein localises to the cell junction. It is found in the tight junction. The protein resides in the cell membrane. Its function is as follows. Plays a major role in tight junction-specific obliteration of the intercellular space, through calcium-independent cell-adhesion activity. This is Claudin-5 (Cldn5) from Mus musculus (Mouse).